Consider the following 98-residue polypeptide: Keratin-associated protein 3-3 (98 aa).

N-acetylalanine is present on Ala2. A run of 3 repeats spans residues 3-7 (CCAPL), 8-12 (CCSAR), and 47-51 (CCDNC). The 3 X 5 AA repeats of C-C-X(3) stretch occupies residues 3-59 (CCAPLCCSARTSPATTICSSDKFCRCGVCLPSTCPHTVWLLEPTCCDNCPPPCHIPQ).

Belongs to the KRTAP type 3 family. Interacts with hair keratins.

Its function is as follows. In the hair cortex, hair keratin intermediate filaments are embedded in an interfilamentous matrix, consisting of hair keratin-associated proteins (KRTAP), which are essential for the formation of a rigid and resistant hair shaft through their extensive disulfide bond cross-linking with abundant cysteine residues of hair keratins. The matrix proteins include the high-sulfur and high-glycine-tyrosine keratins. The protein is Keratin-associated protein 3-3 of Bos taurus (Bovine).